Here is a 240-residue protein sequence, read N- to C-terminus: 7-cyano-7-deazaguanine synthase (240 aa).

ATP is bound at residue Phe18–Leu28. Residues Cys197, Cys206, Cys209, and Cys212 each coordinate Zn(2+).

This sequence belongs to the QueC family. Zn(2+) serves as cofactor.

It carries out the reaction 7-carboxy-7-deazaguanine + NH4(+) + ATP = 7-cyano-7-deazaguanine + ADP + phosphate + H2O + H(+). Its pathway is purine metabolism; 7-cyano-7-deazaguanine biosynthesis. Catalyzes the ATP-dependent conversion of 7-carboxy-7-deazaguanine (CDG) to 7-cyano-7-deazaguanine (preQ(0)). This Shewanella baltica (strain OS223) protein is 7-cyano-7-deazaguanine synthase.